The following is a 218-amino-acid chain: Trimethylamine corrinoid protein 2 (218 aa).

Positions 1 to 92 constitute a B12-binding N-terminal domain; the sequence is MAGKEEIIAK…EMEKRKSQTK (92 aa). Residues 94–218 enclose the B12-binding domain; that stretch reads LGTVIIGTIE…AKVKAALKVG (125 aa). His-107 contributes to the methylcob(III)alamin binding site.

This sequence belongs to the methylamine corrinoid protein family. As to quaternary structure, can form a complex with MttB.

It participates in one-carbon metabolism; methanogenesis from trimethylamine. Acts probably as a methyl group carrier between MttB and either MtbA or MtaA. This Methanosarcina mazei (strain ATCC BAA-159 / DSM 3647 / Goe1 / Go1 / JCM 11833 / OCM 88) (Methanosarcina frisia) protein is Trimethylamine corrinoid protein 2 (mttC2).